The chain runs to 490 residues: Cytochrome P450 2C8 (490 aa).

Positions 100, 204, and 241 each coordinate substrate. Phosphoserine is present on Ser-100. Cys-435 contacts heme.

The protein belongs to the cytochrome P450 family. It depends on heme as a cofactor.

Its subcellular location is the endoplasmic reticulum membrane. It localises to the microsome membrane. The enzyme catalyses an organic molecule + reduced [NADPH--hemoprotein reductase] + O2 = an alcohol + oxidized [NADPH--hemoprotein reductase] + H2O + H(+). It catalyses the reaction (5Z,8Z,11Z,14Z)-eicosatetraenoate + reduced [NADPH--hemoprotein reductase] + O2 = (11R,12S)-epoxy-(5Z,8Z,14Z)-eicosatrienoate + oxidized [NADPH--hemoprotein reductase] + H2O + H(+). It carries out the reaction (5Z,8Z,11Z,14Z)-eicosatetraenoate + reduced [NADPH--hemoprotein reductase] + O2 = (11S,12R)-epoxy-(5Z,8Z,14Z)-eicosatrienoate + oxidized [NADPH--hemoprotein reductase] + H2O + H(+). The catalysed reaction is (5Z,8Z,11Z,14Z)-eicosatetraenoate + reduced [NADPH--hemoprotein reductase] + O2 = (14R,15S)-epoxy-(5Z,8Z,11Z)-eicosatrienoate + oxidized [NADPH--hemoprotein reductase] + H2O + H(+). The enzyme catalyses (5Z,8Z,11Z,14Z)-eicosatetraenoate + reduced [NADPH--hemoprotein reductase] + O2 = (14S,15R)-epoxy-(5Z,8Z,11Z)-eicosatrienoate + oxidized [NADPH--hemoprotein reductase] + H2O + H(+). It catalyses the reaction (5Z,8Z,11Z,14Z,17Z)-eicosapentaenoate + reduced [NADPH--hemoprotein reductase] + O2 = 11,12-epoxy-(5Z,8Z,14Z,17Z)-eicosatetraenoate + oxidized [NADPH--hemoprotein reductase] + H2O + H(+). It carries out the reaction (5Z,8Z,11Z,14Z,17Z)-eicosapentaenoate + reduced [NADPH--hemoprotein reductase] + O2 = 14,15-epoxy-(5Z,8Z,11Z,17Z)-eicosatetraenoate + oxidized [NADPH--hemoprotein reductase] + H2O + H(+). The catalysed reaction is (5Z,8Z,11Z,14Z,17Z)-eicosapentaenoate + reduced [NADPH--hemoprotein reductase] + O2 = (17R,18S)-epoxy-(5Z,8Z,11Z,14Z)-eicosatetraenoate + oxidized [NADPH--hemoprotein reductase] + H2O + H(+). The enzyme catalyses (5Z,8Z,11Z,14Z,17Z)-eicosapentaenoate + reduced [NADPH--hemoprotein reductase] + O2 = (17S,18R)-epoxy-(5Z,8Z,11Z,14Z)-eicosatetraenoate + oxidized [NADPH--hemoprotein reductase] + H2O + H(+). It catalyses the reaction (4Z,7Z,10Z,13Z,16Z,19Z)-docosahexaenoate + reduced [NADPH--hemoprotein reductase] + O2 = (19R,20S)-epoxy-(4Z,7Z,10Z,13Z,16Z)-docosapentaenoate + oxidized [NADPH--hemoprotein reductase] + H2O + H(+). It carries out the reaction (4Z,7Z,10Z,13Z,16Z,19Z)-docosahexaenoate + reduced [NADPH--hemoprotein reductase] + O2 = (19S,20R)-epoxy-(4Z,7Z,10Z,13Z,16Z)-docosapentaenoate + oxidized [NADPH--hemoprotein reductase] + H2O + H(+). The catalysed reaction is all-trans-retinoate + reduced [NADPH--hemoprotein reductase] + O2 = all-trans-4-hydroxyretinoate + oxidized [NADPH--hemoprotein reductase] + H2O + H(+). The enzyme catalyses 17beta-estradiol + reduced [NADPH--hemoprotein reductase] + O2 = 16alpha,17beta-estriol + oxidized [NADPH--hemoprotein reductase] + H2O + H(+). It catalyses the reaction estrone + reduced [NADPH--hemoprotein reductase] + O2 = 16alpha-hydroxyestrone + oxidized [NADPH--hemoprotein reductase] + H2O + H(+). Its pathway is steroid metabolism. It participates in lipid metabolism; arachidonate metabolism. It functions in the pathway cofactor metabolism; retinol metabolism. Functionally, a cytochrome P450 monooxygenase involved in the metabolism of various endogenous substrates, including fatty acids, steroid hormones and vitamins. Mechanistically, uses molecular oxygen inserting one oxygen atom into a substrate, and reducing the second into a water molecule, with two electrons provided by NADPH via cytochrome P450 reductase (NADPH--hemoprotein reductase). Primarily catalyzes the epoxidation of double bonds of polyunsaturated fatty acids (PUFA) with a preference for the last double bond. Catalyzes the hydroxylation of carbon-hydrogen bonds. Metabolizes all trans-retinoic acid toward its 4-hydroxylated form. Displays 16-alpha hydroxylase activity toward estrogen steroid hormones, 17beta-estradiol (E2) and estrone (E1). Plays a role in the oxidative metabolism of xenobiotics. It is the principal enzyme responsible for the metabolism of the anti-cancer drug paclitaxel (taxol). This chain is Cytochrome P450 2C8, found in Homo sapiens (Human).